Reading from the N-terminus, the 614-residue chain is MINIAGVVSIVLFYLLILVVGIWAGRKKQSGNDSEEEVMLAGRSIGLFVGIFTMTATWVGGGYINGTAEAIYTSGLVWCQAPFGYALSLVFGGIFFANPMRKQGYITMLDPLQDSFGERMGGLLFLPALCGEVFWAAGILAALGATLSVIIDMDHRTSVILSSCIAIFYTLFGGLYSVAYTDVIQLFCIFIGLWMCIPFAWSNEHVGSLSDLEVDWIGHVEPKKHWLYIDYGLLLVFGGIPWQVYFQRVLSSKTAGRAQLLSYVAAAGCILMAIPPVLIGAIAKATPWNETDYKGPYPLTVDETSMILPMVLQYLTPDFVSFFGLGAVSAAVMSSADSSVLSAASMFARNVYKLIFRQKASEMEIIWVMRVAIIVVGILATIMALTIPSIYGLWSMCSDLVYVILFPQLLMVVHFKKHCNTYGSLSAYIVALAIRLSGGEAILGLAPLIKYPGYDEETKEQMFPFRTMAMLLSLVTLISVSWWTKMMFESGKLPPSYDYFRCVVNIPEDVQRVGDPSESGEQLSVMAGPLARSYGAATMAGKDERNGRINPALESDDDLPVAEARRINQETAQAQVKKMLDNATGVKPSGGGGGHLQSQSGMAMPTAEQDNTAF.

A helical transmembrane segment spans residues 6 to 26 (GVVSIVLFYLLILVVGIWAGR). Topologically, residues 27–44 (KKQSGNDSEEEVMLAGRS) are cytoplasmic. The chain crosses the membrane as a helical span at residues 45-65 (IGLFVGIFTMTATWVGGGYIN). At 66–75 (GTAEAIYTSG) the chain is on the extracellular side. The chain crosses the membrane as a helical span at residues 76–96 (LVWCQAPFGYALSLVFGGIFF). Residues 97 to 119 (ANPMRKQGYITMLDPLQDSFGER) are Cytoplasmic-facing. The chain crosses the membrane as a helical span at residues 120 to 140 (MGGLLFLPALCGEVFWAAGIL). The Extracellular segment spans residues 141–158 (AALGATLSVIIDMDHRTS). The chain crosses the membrane as a helical span at residues 159 to 179 (VILSSCIAIFYTLFGGLYSVA). At 180 to 185 (YTDVIQ) the chain is on the cytoplasmic side. The chain crosses the membrane as a helical span at residues 186-206 (LFCIFIGLWMCIPFAWSNEHV). Residues 207–225 (GSLSDLEVDWIGHVEPKKH) are Extracellular-facing. A helical membrane pass occupies residues 226-246 (WLYIDYGLLLVFGGIPWQVYF). The Cytoplasmic segment spans residues 247-262 (QRVLSSKTAGRAQLLS). A helical membrane pass occupies residues 263-283 (YVAAAGCILMAIPPVLIGAIA). Residues 284-305 (KATPWNETDYKGPYPLTVDETS) lie on the Extracellular side of the membrane. N-linked (GlcNAc...) asparagine glycosylation is present at Asn289. Residues 306–326 (MILPMVLQYLTPDFVSFFGLG) traverse the membrane as a helical segment. At 327–364 (AVSAAVMSSADSSVLSAASMFARNVYKLIFRQKASEME) the chain is on the cytoplasmic side. A helical membrane pass occupies residues 365 to 385 (IIWVMRVAIIVVGILATIMAL). Over 386 to 394 (TIPSIYGLW) the chain is Extracellular. A helical membrane pass occupies residues 395 to 415 (SMCSDLVYVILFPQLLMVVHF). At 416 to 424 (KKHCNTYGS) the chain is on the cytoplasmic side. The chain crosses the membrane as a helical span at residues 425 to 445 (LSAYIVALAIRLSGGEAILGL). Residues 446-467 (APLIKYPGYDEETKEQMFPFRT) lie on the Extracellular side of the membrane. The chain crosses the membrane as a helical span at residues 468–488 (MAMLLSLVTLISVSWWTKMMF). Residues 489 to 614 (ESGKLPPSYD…PTAEQDNTAF (126 aa)) are Cytoplasmic-facing. Positions 583–614 (ATGVKPSGGGGGHLQSQSGMAMPTAEQDNTAF) are disordered.

The protein belongs to the sodium:solute symporter (SSF) (TC 2.A.21) family.

The protein localises to the membrane. Imports choline from the extracellular space to the neuron with high affinity. Rate-limiting step in acetylcholine synthesis. Sodium ion and chloride ion dependent. The polypeptide is High-affinity choline transporter 1 (Drosophila melanogaster (Fruit fly)).